Consider the following 424-residue polypeptide: Serine--tRNA ligase (424 aa).

231-233 is an L-serine binding site; sequence TAE. 262-264 provides a ligand contact to ATP; sequence RSE. An L-serine-binding site is contributed by E285. Residue 349–352 coordinates ATP; that stretch reads EISS. Position 385 (S385) interacts with L-serine.

This sequence belongs to the class-II aminoacyl-tRNA synthetase family. Type-1 seryl-tRNA synthetase subfamily. As to quaternary structure, homodimer. The tRNA molecule binds across the dimer.

The protein localises to the cytoplasm. It carries out the reaction tRNA(Ser) + L-serine + ATP = L-seryl-tRNA(Ser) + AMP + diphosphate + H(+). It catalyses the reaction tRNA(Sec) + L-serine + ATP = L-seryl-tRNA(Sec) + AMP + diphosphate + H(+). The protein operates within aminoacyl-tRNA biosynthesis; selenocysteinyl-tRNA(Sec) biosynthesis; L-seryl-tRNA(Sec) from L-serine and tRNA(Sec): step 1/1. Catalyzes the attachment of serine to tRNA(Ser). Is also able to aminoacylate tRNA(Sec) with serine, to form the misacylated tRNA L-seryl-tRNA(Sec), which will be further converted into selenocysteinyl-tRNA(Sec). This chain is Serine--tRNA ligase, found in Bacillus cereus (strain ZK / E33L).